The following is a 563-amino-acid chain: Arginine--tRNA ligase (563 aa).

The 'HIGH' region signature appears at 121 to 131 (PNIAKPFSIGH).

Belongs to the class-I aminoacyl-tRNA synthetase family. In terms of assembly, monomer.

The protein resides in the cytoplasm. It carries out the reaction tRNA(Arg) + L-arginine + ATP = L-arginyl-tRNA(Arg) + AMP + diphosphate. The sequence is that of Arginine--tRNA ligase from Streptococcus pyogenes serotype M2 (strain MGAS10270).